Consider the following 329-residue polypeptide: Phosphate acyltransferase (329 aa).

The protein belongs to the PlsX family. Homodimer. Probably interacts with PlsY.

It is found in the cytoplasm. The catalysed reaction is a fatty acyl-[ACP] + phosphate = an acyl phosphate + holo-[ACP]. It participates in lipid metabolism; phospholipid metabolism. In terms of biological role, catalyzes the reversible formation of acyl-phosphate (acyl-PO(4)) from acyl-[acyl-carrier-protein] (acyl-ACP). This enzyme utilizes acyl-ACP as fatty acyl donor, but not acyl-CoA. The chain is Phosphate acyltransferase from Exiguobacterium sp. (strain ATCC BAA-1283 / AT1b).